The following is a 269-amino-acid chain: Small ribosomal subunit protein uS2 (269 aa).

A disordered region spans residues 235–269 (FDAKNPLKPQNYNTLNKRPYQDSPRKPSYQNQNQR).

This sequence belongs to the universal ribosomal protein uS2 family.

This chain is Small ribosomal subunit protein uS2, found in Aster yellows witches'-broom phytoplasma (strain AYWB).